A 390-amino-acid chain; its full sequence is Succinyl-diaminopimelate desuccinylase (390 aa).

Residue H74 coordinates Zn(2+). D76 is a catalytic residue. D107 provides a ligand contact to Zn(2+). The active-site Proton acceptor is E140. Residues E141, E169, and H363 each coordinate Zn(2+).

The protein belongs to the peptidase M20A family. DapE subfamily. In terms of assembly, homodimer. Zn(2+) is required as a cofactor. Co(2+) serves as cofactor.

The enzyme catalyses N-succinyl-(2S,6S)-2,6-diaminopimelate + H2O = (2S,6S)-2,6-diaminopimelate + succinate. Its pathway is amino-acid biosynthesis; L-lysine biosynthesis via DAP pathway; LL-2,6-diaminopimelate from (S)-tetrahydrodipicolinate (succinylase route): step 3/3. Catalyzes the hydrolysis of N-succinyl-L,L-diaminopimelic acid (SDAP), forming succinate and LL-2,6-diaminopimelate (DAP), an intermediate involved in the bacterial biosynthesis of lysine and meso-diaminopimelic acid, an essential component of bacterial cell walls. This Bartonella henselae (strain ATCC 49882 / DSM 28221 / CCUG 30454 / Houston 1) (Rochalimaea henselae) protein is Succinyl-diaminopimelate desuccinylase.